The sequence spans 331 residues: MSDILAVAREQVLERGVGLDQDQTLQVLQLPDDRLDELLALAHEVRMAHCGPDVEVEGIISLKTGGCPEDCHFCSQSGLFASPVRSAWLDVPSLVEAAKQTAKTGATEFCIVAAVRGPDERLLAQVAAGIEAIRNEVDIQIACSLGMLTQDQVERLSAMGVHRYNHNLETARSFFTNVVTTHSWEERWETLQMVREAGMEVCCGGILGMGESLGQRAEFAANLAELDPHEVPLNFLNPRPGTPFGDLEVLPATEALKAVAAFRLALPRTMLRFAGGREITLGDLGAKQGILGGINAVIVGNYLTTLGRPAEADLQLLDDLQMPIKALNATL.

The Radical SAM core domain maps to 52–277 (PDVEVEGIIS…RTMLRFAGGR (226 aa)). [4Fe-4S] cluster contacts are provided by Cys67, Cys71, and Cys74. Residues Cys110, Cys143, Cys202, and Arg272 each coordinate [2Fe-2S] cluster.

Belongs to the radical SAM superfamily. Biotin synthase family. As to quaternary structure, homodimer. [4Fe-4S] cluster serves as cofactor. The cofactor is [2Fe-2S] cluster.

It catalyses the reaction (4R,5S)-dethiobiotin + (sulfur carrier)-SH + 2 reduced [2Fe-2S]-[ferredoxin] + 2 S-adenosyl-L-methionine = (sulfur carrier)-H + biotin + 2 5'-deoxyadenosine + 2 L-methionine + 2 oxidized [2Fe-2S]-[ferredoxin]. It functions in the pathway cofactor biosynthesis; biotin biosynthesis; biotin from 7,8-diaminononanoate: step 2/2. Its function is as follows. Catalyzes the conversion of dethiobiotin (DTB) to biotin by the insertion of a sulfur atom into dethiobiotin via a radical-based mechanism. The chain is Biotin synthase from Mycolicibacterium gilvum (strain PYR-GCK) (Mycobacterium gilvum (strain PYR-GCK)).